Here is a 955-residue protein sequence, read N- to C-terminus: uncharacterized protein (955 aa).

A signal peptide spans 1 to 24 (MQSSLIKILGVLAIVATLVCFVFA). Residues 127–146 (STRPGKSNLDDNGKMIPIPR) form a disordered region. 6 helical membrane-spanning segments follow: residues 597–617 (IKAL…LGFA), 707–727 (LGLS…IVII), 739–759 (AFMA…FLLF), 781–801 (VVLM…LDFV), 818–838 (FIGT…INWF), and 857–877 (IVAL…SGNM). Residues 905–955 (LSQVGMDEKTRKGITGRAKERLKQRNETLKQAEKTRKNAPKEEPPKAEIPK) are disordered. Residues 910-955 (MDEKTRKGITGRAKERLKQRNETLKQAEKTRKNAPKEEPPKAEIPK) show a composition bias toward basic and acidic residues.

This sequence belongs to the TrbL/VirB6 family.

It localises to the cell membrane. This is an uncharacterized protein from Rickettsia bellii (strain RML369-C).